Here is a 140-residue protein sequence, read N- to C-terminus: Histone H3-like centromeric protein A (140 aa).

Residues 1 to 46 form a disordered region; sequence MGPRRRSRKPEAPRRRSPSPTPTPGPSRRGPSLGASSHQHSRRRQG. Residue Gly2 is modified to N,N,N-trimethylglycine. Ser7 bears the Phosphoserine; by AURKA and AURKB mark. Residues Ser17, Ser19, and Ser27 each carry the phosphoserine modification. Residues 26-37 show a composition bias toward low complexity; that stretch reads PSRRGPSLGASS. The segment at 39–54 is important for flexibility of DNA ends that protrude from nucleosomes; the sequence is QHSRRRQGWLKEIRKL. Ser68 bears the Phosphoserine mark. The segment at 75–116 is CATD; the sequence is CVKFTRGVDFNWQAQALLALQEAAEAFLVHLFEDAYLLTLHA.

This sequence belongs to the histone H3 family. Component of centromeric nucleosomes, where DNA is wrapped around a histone octamer core. The octamer contains two molecules each of H2A, H2B, CENPA and H4 assembled in one CENPA-H4 heterotetramer and two H2A-H2B heterodimers. CENPA modulates the DNA-binding characteristics of nucleosomes so that protruding DNA ends have higher flexibility than in nucleosomes containing conventional histone H3. Inhibits binding of histone H1 to nucleosomes, since histone H1 binds preferentially to rigid DNA linkers that protrude from nucleosomes. Nucleosomes containing CENPA also contain histone H2A variants such as MACROH2A and H2A.Z/H2AZ1. The CENPA-H4 heterotetramer is more compact and structurally more rigid than corresponding H3-H4 heterotetramers. Can assemble into nucleosomes that contain both CENPA and histone H3.3; these nucleosomes interact with a single CENPC chain. Heterotrimer composed of HJURP, CENPA and histone H4, where HJURP interacts with the dimer formed by CENPA and histone H4 and prevents tetramerization of CENPA and H4. Component of the CENPA-NAC complex, at least composed of CENPA, CENPC, CENPH, CENPM, CENPN, CENPT and CENPU. Interacts (via CATD domain) with HJURP; the interaction is direct and is required for its localization to centromeres. Interacts with CENPC, CENPN and CENPT; interaction is direct. Part of a centromere complex consisting of CENPA, CENPT and CENPW. Identified in centromere complexes containing histones H2A, H2B and H4, and at least CENPA, CENPB, CENPC, CENPT, CENPN, HJURP, SUPT16H, SSRP1 and RSF1. Can self-associate. The CENPA-H4 heterotetramer can bind DNA by itself (in vitro). Interacts with CDK1, PPP1CA and RBBP7. As to quaternary structure, (Microbial infection) Interacts directly with herpes virus HHV-1 protein ICP0. Ubiquitinated. Interaction with herpes virus HSV-1 ICP0 protein, leads to its degradation by the proteasome pathway. Post-translationally, trimethylated by NTMT1 at the N-terminal glycine after cleavage of Met-1. Methylation is low before incorporation into nucleosomes and increases with cell cycle progression, with the highest levels in mitotic nucleosomes. In terms of processing, phosphorylated by CDK1 at Ser-68 during early mitosis; this abolishes association with chromatin and centromeres, prevents interaction with HJURP and thereby prevents premature assembly of CENPA into centromeres. Dephosphorylated at Ser-68 by PPP1CA during late mitosis. Phosphorylation of Ser-7 by AURKA and AURKB during prophase is required for localization of AURKA and AURKB at inner centromere and is essential for normal cytokinesis. Initial phosphorylation during prophase is mediated by AURKA and is maintained by AURKB. Poly-ADP-ribosylated by PARP1.

The protein localises to the nucleus. It localises to the chromosome. The protein resides in the centromere. Its function is as follows. Histone H3-like nucleosomal protein that is specifically found in centromeric nucleosomes. Replaces conventional H3 in the nucleosome core of centromeric chromatin that serves as an assembly site for the inner kinetochore. The presence of CENPA subtly modifies the nucleosome structure and the way DNA is wrapped around the nucleosome and gives rise to protruding DNA ends that are less well-ordered and rigid compared to nucleosomes containing histone H3. May serve as an epigenetic mark that propagates centromere identity through replication and cell division. Required for recruitment and assembly of kinetochore proteins, and as a consequence required for progress through mitosis, chromosome segregation and cytokinesis. This Homo sapiens (Human) protein is Histone H3-like centromeric protein A (CENPA).